A 253-amino-acid chain; its full sequence is Tetraspanin-3 (253 aa).

Residues 1-11 (MGQCGITSSKT) are Cytoplasmic-facing. A helical transmembrane segment spans residues 12 to 32 (VLVFLNLIFWGAAGILCYVGA). Topologically, residues 33–50 (YVFITYDDYDHFFEDVYT) are extracellular. The helical transmembrane segment at 51–71 (LIPAVVIIAVGALLFIIGLIG) threads the bilayer. At 72–85 (CCATIRESRCGLAT) the chain is on the cytoplasmic side. The chain crosses the membrane as a helical span at residues 86-106 (FVIILLLVFVTEVVVVVLGYV). The Extracellular portion of the chain corresponds to 107–212 (YRAKVENEVD…KKLQEIMMHV (106 aa)). 4 N-linked (GlcNAc...) asparagine glycosylation sites follow: Asn127, Asn152, Asn167, and Asn183. The helical transmembrane segment at 213–233 (IWAALAFAAIQLLGMLCACIV) threads the bilayer. At 234 to 253 (LCRRSRDPAYELLITGGTYA) the chain is on the cytoplasmic side.

It belongs to the tetraspanin (TM4SF) family. Interacts with claudin-11/CLDN11 and integrins.

The protein resides in the membrane. Regulates the proliferation and migration of oligodendrocytes, a process essential for normal myelination and repair. The sequence is that of Tetraspanin-3 (TSPAN3) from Homo sapiens (Human).